The chain runs to 222 residues: Cytochrome b6 (222 aa).

A helical membrane pass occupies residues 39-59 (IFYCLGGITLTCFLIQFATGF). A heme c-binding site is contributed by Cys42. Heme b is bound by residues His93 and His107. The next 3 membrane-spanning stretches (helical) occupy residues 97–117 (ASMMVLMMILHVFRVYLTGGF), 123–143 (LTWVTGVVLAVITVSFGVTGY), and 193–213 (LHTFVLPWLIAVFMLLHFLMI). The heme b site is built by His194 and His209.

The protein belongs to the cytochrome b family. PetB subfamily. In terms of assembly, the 4 large subunits of the cytochrome b6-f complex are cytochrome b6, subunit IV (17 kDa polypeptide, PetD), cytochrome f and the Rieske protein, while the 4 small subunits are PetG, PetL, PetM and PetN. The complex functions as a dimer. Heme b serves as cofactor. It depends on heme c as a cofactor.

It is found in the cellular thylakoid membrane. Component of the cytochrome b6-f complex, which mediates electron transfer between photosystem II (PSII) and photosystem I (PSI), cyclic electron flow around PSI, and state transitions. This chain is Cytochrome b6, found in Cyanothece sp. (strain PCC 7425 / ATCC 29141).